The sequence spans 140 residues: Cytochrome b (140 aa).

Residues 38–58 (FFALHFLLPFVLAALVIMHLI) traverse the membrane as a helical segment. Positions 42 and 56 each coordinate heme b. A ubiquinone is bound at residue His61. A helical transmembrane segment spans residues 85–105 (FVFKDLVTIFIFFIVLSIFVF).

Belongs to the cytochrome b family. Fungal cytochrome b-c1 complex contains 10 subunits; 3 respiratory subunits, 2 core proteins and 5 low-molecular weight proteins. Cytochrome b-c1 complex is a homodimer. The cofactor is heme b.

The protein resides in the mitochondrion inner membrane. Functionally, component of the ubiquinol-cytochrome c reductase complex (complex III or cytochrome b-c1 complex) that is part of the mitochondrial respiratory chain. The b-c1 complex mediates electron transfer from ubiquinol to cytochrome c. Contributes to the generation of a proton gradient across the mitochondrial membrane that is then used for ATP synthesis. This is Cytochrome b (cob) from Aspergillus terreus.